Here is a 66-residue protein sequence, read N- to C-terminus: Probable Sec-independent protein translocase protein TatE (66 aa).

Residues 1–21 traverse the membrane as a helical segment; that stretch reads MEGISITKLLVIAVLIVLLFG. Residues 46–66 form a disordered region; sequence ETPAAKKSDGAEAAPRVENKE.

The protein belongs to the TatA/E family. TatE subfamily.

It is found in the cell inner membrane. Its function is as follows. Part of the twin-arginine translocation (Tat) system that transports large folded proteins containing a characteristic twin-arginine motif in their signal peptide across membranes. TatE shares overlapping functions with TatA. This chain is Probable Sec-independent protein translocase protein TatE, found in Edwardsiella piscicida.